Reading from the N-terminus, the 212-residue chain is Eggshell protein 1 (212 aa).

A signal peptide spans 1–27 (MKSSLTLLFLAAIGYTIAYPPPSDYDS). The segment at 155-212 (RKNGHGKGGKGGNGGGGGKGGGKGGGNGKGNGKGGGGKNGGGKGGNGGKGGSYAPSYY) is disordered. Over residues 163–205 (GKGGNGGGGGKGGGKGGGNGKGNGKGGGGKNGGGKGGNGGKGG) the composition is skewed to gly residues.

Detected only in mature female parasites.

The polypeptide is Eggshell protein 1 (ESG-1) (Schistosoma japonicum (Blood fluke)).